Here is a 485-residue protein sequence, read N- to C-terminus: Arginine/agmatine antiporter (485 aa).

A run of 12 helical transmembrane segments spans residues 12 to 34 (GTIALAGMVVSSIIGGGIFSLPQ), 38 to 60 (ATAGAGAVILSWILTGFGMFFIA), 89 to 111 (IGFTIGWGYWLCQIFGNVGYAVI), 126 to 148 (GGNTLPAILGGSILIWVFNFIVL), 155 to 177 (SIINVIGTIFKIIPLIIFIILTA), 211 to 230 (TMLVTLWAFIGIEGAVVMSG), 243 to 265 (VLGFLGCLTIYILFSLLPFGSLF), 291 to 313 (VLMNVGLIIAVLSSWLSWTIIVA), 363 to 385 (WNTMLSITGVMVLPAYLASAAFL), 400 to 422 (IKAPLAMITGILGVVYSLWLIYA), 427 to 446 (YLFMALVLLALGIPFYIDAG), and 461 to 483 (IVGMTFIGLLALTAIFLFSTGRI).

The protein belongs to the amino acid-polyamine-organocation (APC) superfamily. Basic amino acid/polyamine antiporter (APA) (TC 2.A.3.2) family.

The protein resides in the cell inner membrane. Catalyzes the exchange of L-arginine for agmatine. The arginine uptake by the bacterium in the macrophage may be a virulence factor against the host innate immune response. The chain is Arginine/agmatine antiporter (aaxC) from Chlamydia pneumoniae (Chlamydophila pneumoniae).